The chain runs to 860 residues: Spindle and centriole-associated protein 1 (860 aa).

Disordered stretches follow at residues 160–200, 232–254, and 293–330; these read ESVI…SQSN, QSQM…QKAA, and KQLL…SSSN. The residue at position 236 (Thr236) is a Phosphothreonine. Residues 236 to 249 are compositionally biased toward low complexity; the sequence is TASSGTPSSASPSG. The segment covering 308–330 has biased composition (polar residues); that stretch reads PSKQKSSMLSASTASTDLPSSSN. Residues 383–437 adopt a coiled-coil conformation; that stretch reads RYLKESELQLRKEVETRQRLEEALGDHRELIDALTAEVLFLREENTATQARLQQY. The residue at position 646 (Ser646) is a Phosphoserine. The stretch at 729 to 755 forms a coiled coil; that stretch reads SSMEERIAELNRQSMEARGKLLQLIEQ. A phosphoserine mark is found at Ser765, Ser769, and Ser824. The tract at residues 790 to 860 is disordered; the sequence is IPGAEAPESS…GWFALSTHVS (71 aa). Low complexity predominate over residues 808 to 824; the sequence is SGLNSRRSSGAASNSCS.

As to quaternary structure, interacts with CEP120.

The protein localises to the cytoplasm. It localises to the cytoskeleton. Its subcellular location is the microtubule organizing center. The protein resides in the centrosome. It is found in the centriole. The protein localises to the spindle. Its function is as follows. Regulator required for centriole duplication. for proper bipolar spindle formation and chromosome congression in mitosis. This Bos taurus (Bovine) protein is Spindle and centriole-associated protein 1 (SPICE1).